The following is a 601-amino-acid chain: Putative purine permease C1399.01c (601 aa).

12 helical membrane passes run 64–84 (VPVLLALLLGFQHALAMVGGV), 102–122 (TNYLVSAGLISSGIMTLIQIA), 131–151 (YYIGTGMLSVLGISFTSVSVA), 179–199 (YGAFLATACVCSLLEIFMSFI), 207–227 (LFPPIVTGPVVLLIGTSLISS), 264–284 (GWGSAQFIGLGFSVFATIIII), 294–314 (TTSVVLGLVVGMIISAATGYW), 337–357 (IYGPAVLPMLALYIVNMMEAI), 424–444 (FFCAVILFFMGLFAKFAAVFV), 450–470 (VLGGMTTFLFSSVAVSGIAII), 481–501 (FILTASMTLGMGAILVPDWFT), and 522–542 (LVMENGFAIGAFISIFLNLIL).

The protein belongs to the nucleobase:cation symporter-2 (NCS2) (TC 2.A.40) family.

Its subcellular location is the vacuole membrane. The chain is Putative purine permease C1399.01c from Schizosaccharomyces pombe (strain 972 / ATCC 24843) (Fission yeast).